Here is a 570-residue protein sequence, read N- to C-terminus: Sulfite reductase [NADPH] hemoprotein beta-component (570 aa).

[4Fe-4S] cluster contacts are provided by cysteine 434, cysteine 440, cysteine 479, and cysteine 483. Cysteine 483 contacts siroheme.

This sequence belongs to the nitrite and sulfite reductase 4Fe-4S domain family. As to quaternary structure, alpha(8)-beta(8). The alpha component is a flavoprotein, the beta component is a hemoprotein. Siroheme serves as cofactor. Requires [4Fe-4S] cluster as cofactor.

The catalysed reaction is hydrogen sulfide + 3 NADP(+) + 3 H2O = sulfite + 3 NADPH + 4 H(+). Its pathway is sulfur metabolism; hydrogen sulfide biosynthesis; hydrogen sulfide from sulfite (NADPH route): step 1/1. In terms of biological role, component of the sulfite reductase complex that catalyzes the 6-electron reduction of sulfite to sulfide. This is one of several activities required for the biosynthesis of L-cysteine from sulfate. This Salmonella gallinarum (strain 287/91 / NCTC 13346) protein is Sulfite reductase [NADPH] hemoprotein beta-component.